The sequence spans 220 residues: Translation initiation factor 6 (220 aa).

The protein belongs to the eIF-6 family.

In terms of biological role, binds to the 50S ribosomal subunit and prevents its association with the 30S ribosomal subunit to form the 70S initiation complex. The sequence is that of Translation initiation factor 6 from Pyrobaculum aerophilum (strain ATCC 51768 / DSM 7523 / JCM 9630 / CIP 104966 / NBRC 100827 / IM2).